The chain runs to 386 residues: MGSIGAVSMEFCFDVFKELKVHHANENIFYSPFTIISALAMVYLGAKDSTRTQINKVVRFDKLPGFGDSVEAQCGTSVNVHSSLRDILNQITKPNDVYSFSLASRLYAEETYPILPEYLQCVKELYRGGLESINFQTAADQARGLINSWVESQTNGMIKNVLQPSSVDSQTAMVLVNAIVFKGLWEKAFKDEDTQAIPFRVTEQESKPVQMMYQIGLFKVASMASEKMKILELPFASGTMSMWVLLPDEVSGLEQLETTISFEKMTEWISSNIMEERRIKVYLPRMKMEEKYNLTSVLMAMGITDLFSSSANLSGISSAGSLKISQAAHAAYAEIYEAGREVIGSAEAGADATSVSEEFRVDHPFLYCIKHNLTNSILFFGRCISP.

Gly2 bears the N-acetylglycine mark. A signal peptide (not cleaved) is located at residues 22–48 (HHANENIFYSPFTIISALAMVYLGAKD). Ser69 is modified (phosphoserine). A disulfide bond links Cys74 and Cys121. N-linked (GlcNAc...) asparagine glycosylation is found at Asn293 and Asn312. Ser345 is subject to Phosphoserine. N-linked (GlcNAc...) asparagine glycosylation occurs at Asn372.

It belongs to the serpin family. Ov-serpin subfamily. The signal sequence is not cleaved. The functional signal for membrane translocation of ovalbumin becomes accessible when the nascent chain is 50 to 60 residues long. The hydrophobic sequence which lies between residues 27 and 43 folds back on the preceding residues to form an amphipathic hairpin structure which is the signal element recognized by the membrane. As to expression, major protein of egg white.

It localises to the secreted. In terms of biological role, storage protein of egg white. Lack protease inhibitory activity. This chain is Ovalbumin (SERPINB14), found in Meleagris gallopavo (Wild turkey).